A 540-amino-acid polypeptide reads, in one-letter code: Glucose-6-phosphate isomerase (540 aa).

Glu-346 (proton donor) is an active-site residue. Active-site residues include His-377 and Lys-505.

The protein belongs to the GPI family.

It is found in the cytoplasm. It carries out the reaction alpha-D-glucose 6-phosphate = beta-D-fructose 6-phosphate. The protein operates within carbohydrate biosynthesis; gluconeogenesis. Its pathway is carbohydrate degradation; glycolysis; D-glyceraldehyde 3-phosphate and glycerone phosphate from D-glucose: step 2/4. Functionally, catalyzes the reversible isomerization of glucose-6-phosphate to fructose-6-phosphate. This Francisella tularensis subsp. holarctica (strain FTNF002-00 / FTA) protein is Glucose-6-phosphate isomerase.